A 459-amino-acid chain; its full sequence is Glutamate--tRNA ligase 1 (459 aa).

The 'HIGH' region signature appears at 8 to 18 (PSPTGYIHIGN). The 'KMSKS' region motif lies at 249–253 (GLSKR). Lys252 is a binding site for ATP.

It belongs to the class-I aminoacyl-tRNA synthetase family. Glutamate--tRNA ligase type 1 subfamily. Monomer.

Its subcellular location is the cytoplasm. It carries out the reaction tRNA(Glu) + L-glutamate + ATP = L-glutamyl-tRNA(Glu) + AMP + diphosphate. Functionally, catalyzes the attachment of glutamate to tRNA(Glu) in a two-step reaction: glutamate is first activated by ATP to form Glu-AMP and then transferred to the acceptor end of tRNA(Glu). This Bartonella quintana (strain Toulouse) (Rochalimaea quintana) protein is Glutamate--tRNA ligase 1.